Here is a 309-residue protein sequence, read N- to C-terminus: Mycothiol acetyltransferase (309 aa).

2 N-acetyltransferase domains span residues 16–158 and 166–309; these read ETLA…LDLP and VSVR…RTET. Residue glutamate 47 coordinates 1D-myo-inositol 2-(L-cysteinylamino)-2-deoxy-alpha-D-glucopyranoside. Position 92–94 (92–94) interacts with acetyl-CoA; that stretch reads LVV. 1D-myo-inositol 2-(L-cysteinylamino)-2-deoxy-alpha-D-glucopyranoside is bound by residues glutamate 193, lysine 232, and glutamate 241. Residues 245–247 and 252–258 each bind acetyl-CoA; these read LGI and QGGGLGK. 1D-myo-inositol 2-(L-cysteinylamino)-2-deoxy-alpha-D-glucopyranoside is bound at residue tyrosine 279.

It belongs to the acetyltransferase family. MshD subfamily. As to quaternary structure, monomer.

The catalysed reaction is 1D-myo-inositol 2-(L-cysteinylamino)-2-deoxy-alpha-D-glucopyranoside + acetyl-CoA = mycothiol + CoA + H(+). Functionally, catalyzes the transfer of acetyl from acetyl-CoA to desacetylmycothiol (Cys-GlcN-Ins) to form mycothiol. The chain is Mycothiol acetyltransferase from Streptomyces coelicolor (strain ATCC BAA-471 / A3(2) / M145).